The following is a 406-amino-acid chain: Glycosylated lysosomal membrane protein (406 aa).

The signal sequence occupies residues 1–35 (MRGSVECTWGWGHCAPSPLLLWTLLLFAAPFGLLG). Residues 36–372 (EKTRQVSLEV…VDGLSPLVLG (337 aa)) are Lumenal-facing. Residues asparagine 65, asparagine 134, asparagine 159, asparagine 187, and asparagine 230 are each glycosylated (N-linked (GlcNAc...) asparagine). Residues 373 to 393 (IMAVALGAPGLMLLGGGLVLL) form a helical membrane-spanning segment. Over 394 to 406 (LHHKKYSEYQSIN) the chain is Cytoplasmic. The Lysosomal targeting motif motif lies at 402-406 (YQSIN).

Belongs to the GLMP family. In terms of assembly, interacts (via lumenal domain) with lysosomal protein MFSD1; the interaction starts while both proteins are still in the endoplasmic reticulum and is required for stabilization of MFSD1 in lysosomes but has no direct effect on its targeting to lysosomes or transporter activity. Highly N-glycosylated. N-glycosylation is essential for GLMP stability and for MFSD1 lysosomal localization.

It localises to the lysosome membrane. In terms of biological role, required to protect lysosomal transporter MFSD1 from lysosomal proteolysis and for MFSD1 lysosomal localization. The chain is Glycosylated lysosomal membrane protein from Homo sapiens (Human).